A 349-amino-acid polypeptide reads, in one-letter code: Homoserine O-succinyltransferase (349 aa).

The active-site Acyl-thioester intermediate is C146. Substrate contacts are provided by K167 and S196. The active-site Proton acceptor is the H239. E241 is an active-site residue. R253 serves as a coordination point for substrate.

It belongs to the MetA family.

It localises to the cytoplasm. The catalysed reaction is L-homoserine + succinyl-CoA = O-succinyl-L-homoserine + CoA. It participates in amino-acid biosynthesis; L-methionine biosynthesis via de novo pathway; O-succinyl-L-homoserine from L-homoserine: step 1/1. In terms of biological role, transfers a succinyl group from succinyl-CoA to L-homoserine, forming succinyl-L-homoserine. In vitro, can also use glutaryl-CoA as acyl donor. The sequence is that of Homoserine O-succinyltransferase from Thiobacillus denitrificans (strain ATCC 25259 / T1).